Here is a 93-residue protein sequence, read N- to C-terminus: Large ribosomal subunit protein uL23 (93 aa).

It belongs to the universal ribosomal protein uL23 family. In terms of assembly, part of the 50S ribosomal subunit. Contacts protein L29, and trigger factor when it is bound to the ribosome.

In terms of biological role, one of the early assembly proteins it binds 23S rRNA. One of the proteins that surrounds the polypeptide exit tunnel on the outside of the ribosome. Forms the main docking site for trigger factor binding to the ribosome. This Campylobacter lari (strain RM2100 / D67 / ATCC BAA-1060) protein is Large ribosomal subunit protein uL23.